The following is a 564-amino-acid chain: Septation ring formation regulator EzrA (564 aa).

The Extracellular portion of the chain corresponds to 1 to 4; sequence MVLF. Residues 5–23 traverse the membrane as a helical segment; that stretch reads IILAILVVILIAIGVLFYM. Residues 24–564 are Cytoplasmic-facing; it reads RSNKRNLIEK…KHIEEQVIKE (541 aa). Coiled coils occupy residues 84 to 126, 165 to 223, 271 to 303, and 350 to 435; these read VEEK…HQVT, EAAE…LIRE, MISR…YEVK, and VRQF…RRLL.

The protein belongs to the EzrA family.

It localises to the cell membrane. In terms of biological role, negative regulator of FtsZ ring formation; modulates the frequency and position of FtsZ ring formation. Inhibits FtsZ ring formation at polar sites. Interacts either with FtsZ or with one of its binding partners to promote depolymerization. The polypeptide is Septation ring formation regulator EzrA (Staphylococcus epidermidis (strain ATCC 12228 / FDA PCI 1200)).